Here is a 385-residue protein sequence, read N- to C-terminus: MKNLTILGSTGSIGVSTLDVVAAYPDMFRVVALTAGNNLELLKTQIETFRPELVSVLTAEKAQALSRSLTGKKPEIMHGVEGMIAAATASETTMVVAAIVGAAGLVPTTAAIMAGKDVALANKETLVTAGHLVMQMVREKKVKLYPVDSEHCAVFQSMAGHRSQDIARVILTASGGPFLNWGREQLQGATVADALNHPNWSMGRKITVDSATMMNKGLEVIEARWLFDIPVQRIAVNIHPQSIIHSMVEYVDGSVMAQLGTPDMKGPIAYALTYPGRVPSGVKALDLTALSGLTFFKPDTDRFPALKLAYRAADAGESMPAVMNAANEIAVEAFLAGRIGFMAIAEAIEKVMDLHEPHALASIEEVLETDRWGRRTAKEVLGVGC.

T10, G11, S12, I13, G36, N38, and N122 together coordinate NADPH. Position 123 (K123) interacts with 1-deoxy-D-xylulose 5-phosphate. Position 124 (E124) interacts with NADPH. D148 is a Mn(2+) binding site. The 1-deoxy-D-xylulose 5-phosphate site is built by S149, E150, S174, and H197. E150 is a Mn(2+) binding site. NADPH is bound at residue G203. 1-deoxy-D-xylulose 5-phosphate-binding residues include S210, N215, K216, and E219. E219 contributes to the Mn(2+) binding site.

The protein belongs to the DXR family. Mg(2+) is required as a cofactor. Requires Mn(2+) as cofactor.

The catalysed reaction is 2-C-methyl-D-erythritol 4-phosphate + NADP(+) = 1-deoxy-D-xylulose 5-phosphate + NADPH + H(+). Its pathway is isoprenoid biosynthesis; isopentenyl diphosphate biosynthesis via DXP pathway; isopentenyl diphosphate from 1-deoxy-D-xylulose 5-phosphate: step 1/6. Functionally, catalyzes the NADPH-dependent rearrangement and reduction of 1-deoxy-D-xylulose-5-phosphate (DXP) to 2-C-methyl-D-erythritol 4-phosphate (MEP). In Geobacter sp. (strain M21), this protein is 1-deoxy-D-xylulose 5-phosphate reductoisomerase.